The chain runs to 319 residues: tRNA-modifying protein YgfZ (319 aa).

Residues tryptophan 27 and tryptophan 189 each coordinate folate.

This sequence belongs to the tRNA-modifying YgfZ family.

Its subcellular location is the cytoplasm. Its function is as follows. Folate-binding protein involved in regulating the level of ATP-DnaA and in the modification of some tRNAs. It is probably a key factor in regulatory networks that act via tRNA modification, such as initiation of chromosomal replication. The protein is tRNA-modifying protein YgfZ of Buchnera aphidicola subsp. Acyrthosiphon pisum (strain APS) (Acyrthosiphon pisum symbiotic bacterium).